Consider the following 323-residue polypeptide: uncharacterized protein (323 aa).

Tyrosine 59 serves as the catalytic Proton donor. NADP(+) is bound at residue 198–208; the sequence is SPLAQGLLGGK.

It belongs to the aldo/keto reductase family. Aldo/keto reductase 2 subfamily.

This is an uncharacterized protein from Mycobacterium tuberculosis (strain CDC 1551 / Oshkosh).